The chain runs to 165 residues: Glutamyl-tRNA(Gln) amidotransferase subunit F, mitochondrial (165 aa).

The span at 137-153 (VSDQRGERGFDTSELRT) shows a compositional bias: basic and acidic residues. The disordered stretch occupies residues 137-165 (VSDQRGERGFDTSELRTRINRAKSTAEKE).

It belongs to the GatF family. Subunit of the heterotrimeric GatFAB amidotransferase (AdT) complex, composed of A, B and F subunits.

The protein resides in the mitochondrion inner membrane. It catalyses the reaction L-glutamyl-tRNA(Gln) + L-glutamine + ATP + H2O = L-glutaminyl-tRNA(Gln) + L-glutamate + ADP + phosphate + H(+). Its function is as follows. Allows the formation of correctly charged Gln-tRNA(Gln) through the transamidation of misacylated Glu-tRNA(Gln) in the mitochondria. The reaction takes place in the presence of glutamine and ATP through an activated gamma-phospho-Glu-tRNA(Gln). Required for proper protein synthesis within the mitochondrion. This is Glutamyl-tRNA(Gln) amidotransferase subunit F, mitochondrial from Clavispora lusitaniae (strain ATCC 42720) (Yeast).